The sequence spans 1417 residues: DNA-directed RNA polymerase subunit beta' (1417 aa).

Zn(2+)-binding residues include Cys68, Cys70, Cys83, and Cys86. Asp458, Asp460, and Asp462 together coordinate Mg(2+). Zn(2+) contacts are provided by Cys811, Cys884, Cys891, and Cys894.

This sequence belongs to the RNA polymerase beta' chain family. As to quaternary structure, the RNAP catalytic core consists of 2 alpha, 1 beta, 1 beta' and 1 omega subunit. When a sigma factor is associated with the core the holoenzyme is formed, which can initiate transcription. Requires Mg(2+) as cofactor. It depends on Zn(2+) as a cofactor.

It carries out the reaction RNA(n) + a ribonucleoside 5'-triphosphate = RNA(n+1) + diphosphate. In terms of biological role, DNA-dependent RNA polymerase catalyzes the transcription of DNA into RNA using the four ribonucleoside triphosphates as substrates. The polypeptide is DNA-directed RNA polymerase subunit beta' (Francisella tularensis subsp. holarctica (strain OSU18)).